We begin with the raw amino-acid sequence, 180 residues long: Large ribosomal subunit protein uL6 (180 aa).

It belongs to the universal ribosomal protein uL6 family. In terms of assembly, part of the 50S ribosomal subunit.

Functionally, this protein binds to the 23S rRNA, and is important in its secondary structure. It is located near the subunit interface in the base of the L7/L12 stalk, and near the tRNA binding site of the peptidyltransferase center. The chain is Large ribosomal subunit protein uL6 from Borreliella afzelii (strain PKo) (Borrelia afzelii).